A 209-amino-acid chain; its full sequence is Ribonuclease HII (209 aa).

One can recognise an RNase H type-2 domain in the interval 18–209 (GLVAGVDEVG…FKPVKALLER (192 aa)). A divalent metal cation-binding residues include Asp-24, Glu-25, and Asp-116.

The protein belongs to the RNase HII family. Mn(2+) serves as cofactor. It depends on Mg(2+) as a cofactor.

Its subcellular location is the cytoplasm. The enzyme catalyses Endonucleolytic cleavage to 5'-phosphomonoester.. Functionally, endonuclease that specifically degrades the RNA of RNA-DNA hybrids. This Shewanella sp. (strain MR-7) protein is Ribonuclease HII.